The chain runs to 40 residues: Photosystem II reaction center protein J (40 aa).

The helical transmembrane segment at 8–28 (IPLWIIGTGAGILVIGLIGIF) threads the bilayer.

This sequence belongs to the PsbJ family. PSII is composed of 1 copy each of membrane proteins PsbA, PsbB, PsbC, PsbD, PsbE, PsbF, PsbH, PsbI, PsbJ, PsbK, PsbL, PsbM, PsbT, PsbX, PsbY, PsbZ, Psb30/Ycf12, at least 3 peripheral proteins of the oxygen-evolving complex and a large number of cofactors. It forms dimeric complexes.

Its subcellular location is the plastid. It localises to the chloroplast thylakoid membrane. One of the components of the core complex of photosystem II (PSII). PSII is a light-driven water:plastoquinone oxidoreductase that uses light energy to abstract electrons from H(2)O, generating O(2) and a proton gradient subsequently used for ATP formation. It consists of a core antenna complex that captures photons, and an electron transfer chain that converts photonic excitation into a charge separation. This Aethionema grandiflorum (Persian stone-cress) protein is Photosystem II reaction center protein J.